Reading from the N-terminus, the 310-residue chain is Putative S-adenosyl-L-methionine-dependent methyltransferase MUL_4763 (310 aa).

Residues aspartate 137 and aspartate 166–leucine 167 contribute to the S-adenosyl-L-methionine site.

It belongs to the UPF0677 family.

Its function is as follows. Exhibits S-adenosyl-L-methionine-dependent methyltransferase activity. The chain is Putative S-adenosyl-L-methionine-dependent methyltransferase MUL_4763 from Mycobacterium ulcerans (strain Agy99).